The sequence spans 290 residues: Ribosomal RNA small subunit methyltransferase A (290 aa).

Positions 27, 29, 54, 75, 100, and 125 each coordinate S-adenosyl-L-methionine.

This sequence belongs to the class I-like SAM-binding methyltransferase superfamily. rRNA adenine N(6)-methyltransferase family. RsmA subfamily.

The protein resides in the cytoplasm. The enzyme catalyses adenosine(1518)/adenosine(1519) in 16S rRNA + 4 S-adenosyl-L-methionine = N(6)-dimethyladenosine(1518)/N(6)-dimethyladenosine(1519) in 16S rRNA + 4 S-adenosyl-L-homocysteine + 4 H(+). In terms of biological role, specifically dimethylates two adjacent adenosines (A1518 and A1519) in the loop of a conserved hairpin near the 3'-end of 16S rRNA in the 30S particle. May play a critical role in biogenesis of 30S subunits. The sequence is that of Ribosomal RNA small subunit methyltransferase A from Streptococcus thermophilus (strain ATCC BAA-491 / LMD-9).